The primary structure comprises 892 residues: Putative leucine-rich repeat receptor-like serine/threonine-protein kinase At2g04300 (892 aa).

The first 26 residues, 1 to 26, serve as a signal peptide directing secretion; sequence MKTHPQAILLCVLFFITFGLLHVVEA. Residues 27–523 are Extracellular-facing; it reads GNQEGFISLD…GAKKKNVVVL (497 aa). N-linked (GlcNAc...) asparagine glycans are attached at residues Asn99, Asn186, Asn241, Asn267, and Asn294. 4 LRR repeats span residues 375 to 396, 399 to 422, 423 to 444, and 447 to 467; these read IKNI…PCVP, FMWD…FLNL, SSSH…LQNL, and SNNN…SLLV. Residues Asn407, Asn421, Asn437, Asn450, and Asn469 are each glycosylated (N-linked (GlcNAc...) asparagine). A helical membrane pass occupies residues 524 to 544; it reads VVVSIALVVVLGSALALFLVF. Residues 545–892 are Cytoplasmic-facing; sequence RKRKTPRNEV…FGTEYTPEAR (348 aa). The residue at position 573 (Thr573) is a Phosphothreonine. Positions 582–855 constitute a Protein kinase domain; the sequence is NNFEKILGKG…QVVIELNECL (274 aa). Residues 588 to 596 and Lys610 contribute to the ATP site; that span reads LGKGGFGMV. Tyr655 is modified (phosphotyrosine). The Proton acceptor role is filled by Asp707. Phosphothreonine occurs at positions 742 and 747. Tyr755 carries the post-translational modification Phosphotyrosine.

It belongs to the protein kinase superfamily. Ser/Thr protein kinase family.

The protein localises to the cell membrane. The enzyme catalyses L-seryl-[protein] + ATP = O-phospho-L-seryl-[protein] + ADP + H(+). It catalyses the reaction L-threonyl-[protein] + ATP = O-phospho-L-threonyl-[protein] + ADP + H(+). The chain is Putative leucine-rich repeat receptor-like serine/threonine-protein kinase At2g04300 from Arabidopsis thaliana (Mouse-ear cress).